A 289-amino-acid polypeptide reads, in one-letter code: Bifunctional protein FolD (289 aa).

NADP(+)-binding positions include 166 to 168 (GRS), Ser-191, and Ile-232.

Belongs to the tetrahydrofolate dehydrogenase/cyclohydrolase family. As to quaternary structure, homodimer.

The catalysed reaction is (6R)-5,10-methylene-5,6,7,8-tetrahydrofolate + NADP(+) = (6R)-5,10-methenyltetrahydrofolate + NADPH. It catalyses the reaction (6R)-5,10-methenyltetrahydrofolate + H2O = (6R)-10-formyltetrahydrofolate + H(+). It participates in one-carbon metabolism; tetrahydrofolate interconversion. In terms of biological role, catalyzes the oxidation of 5,10-methylenetetrahydrofolate to 5,10-methenyltetrahydrofolate and then the hydrolysis of 5,10-methenyltetrahydrofolate to 10-formyltetrahydrofolate. In Synechococcus sp. (strain JA-3-3Ab) (Cyanobacteria bacterium Yellowstone A-Prime), this protein is Bifunctional protein FolD.